The primary structure comprises 475 residues: Glutamate--tRNA ligase 2 (475 aa).

The short motif at 9–19 (PSPTGFLHIGS) is the 'HIGH' region element. Residues 238–242 (KLSKR) carry the 'KMSKS' region motif. An ATP-binding site is contributed by Lys-241.

The protein belongs to the class-I aminoacyl-tRNA synthetase family. Glutamate--tRNA ligase type 1 subfamily. Monomer.

It localises to the cytoplasm. The catalysed reaction is tRNA(Glu) + L-glutamate + ATP = L-glutamyl-tRNA(Glu) + AMP + diphosphate. Catalyzes the attachment of glutamate to tRNA(Glu) in a two-step reaction: glutamate is first activated by ATP to form Glu-AMP and then transferred to the acceptor end of tRNA(Glu). In Bartonella quintana (strain Toulouse) (Rochalimaea quintana), this protein is Glutamate--tRNA ligase 2.